Consider the following 422-residue polypeptide: Tyrosine--tRNA ligase (422 aa).

Position 37 (Tyr37) interacts with L-tyrosine. A 'HIGH' region motif is present at residues 42–51; it reads PTEESLHIGH. L-tyrosine is bound by residues Tyr175 and Gln179. The 'KMSKS' region signature appears at 235 to 239; the sequence is KFGKT. Residue Lys238 participates in ATP binding. The S4 RNA-binding domain occupies 357–414; that stretch reads KDLQEALVLTSLAQSRTQAKNMIISNSISINTEKIRKNHIFHEKDKLFGKFTLLSRGK.

This sequence belongs to the class-I aminoacyl-tRNA synthetase family. TyrS type 1 subfamily. Homodimer.

It localises to the cytoplasm. It carries out the reaction tRNA(Tyr) + L-tyrosine + ATP = L-tyrosyl-tRNA(Tyr) + AMP + diphosphate + H(+). Functionally, catalyzes the attachment of tyrosine to tRNA(Tyr) in a two-step reaction: tyrosine is first activated by ATP to form Tyr-AMP and then transferred to the acceptor end of tRNA(Tyr). This Buchnera aphidicola subsp. Acyrthosiphon pisum (strain Tuc7) protein is Tyrosine--tRNA ligase.